Here is a 182-residue protein sequence, read N- to C-terminus: Large ribosomal subunit protein bL25 (182 aa).

This sequence belongs to the bacterial ribosomal protein bL25 family. CTC subfamily. Part of the 50S ribosomal subunit; part of the 5S rRNA/L5/L18/L25 subcomplex. Contacts the 5S rRNA. Binds to the 5S rRNA independently of L5 and L18.

This is one of the proteins that binds to the 5S RNA in the ribosome where it forms part of the central protuberance. This Borrelia hermsii (strain HS1 / DAH) protein is Large ribosomal subunit protein bL25.